The sequence spans 96 residues: Accessory cholera enterotoxin (96 aa).

Residues 76–96 (QALAIVLQALMTRFALRALNL) traverse the membrane as a helical segment.

The protein localises to the secreted. The protein resides in the host cell membrane. In terms of biological role, increases short-circuit current in rabbit ileal tissue mounted in Ussing chambers, by increasing the potential difference. Cultures of V.cholerae containing the cloned ace gene cause fluid secretion in ligated rabbit ileal loops. The polypeptide is Accessory cholera enterotoxin (ace) (Vibrio cholerae serotype O1 (strain ATCC 39315 / El Tor Inaba N16961)).